Reading from the N-terminus, the 524-residue chain is MEHLDLHHIFELGFFVVMIAAGITAIAKKCRQPYPIALVIVGTIIGLVHIPLFEPLKEFITEGEVFNFVIITLFLPALLGEAALKLPFSHLRENKRPVLALFGGTLISFLIVGFSSMWLMHLAIPAAFVFAALMSATDPVSVLSIFKSVGAPKKLSIVVEGESLFNDGLAVVLFNISAFYLMTYLDLGIQGAGLGLWEFVKVISLGLIIGGVLGYVFSQLTKYFDDYPLEIIFSIILFYSSFLLAEMAGASGVIAVVVAALIFGNYGAKIGMSPTTKLNINNFWDVAALLANSLVFLMVGLEITRIDLTDKWGLAIMAIVIVLIARSAAVYISLAFIKKFPVTWKHTINWGGLKGSLSIALVLSLPRDFPGREDILVFAFSVVLFSLVVQGLTIKPLLERLGVNQKEEGNQEYEELLAKGHRLETAIKEVQQVKHNLLIHEAVSSELTDQYKKEVSQLHQQTNKLFETYPELKNKQQTILKKHSLYAQYQAIENLSREDIISNEVAELEQARIIDEIVRLQNDH.

The next 11 membrane-spanning stretches (helical) occupy residues 6-26, 33-53, 59-79, 98-118, 126-146, 169-189, 193-213, 242-262, 283-303, 312-332, and 374-394; these read LHHI…ITAI, PYPI…IPLF, FITE…PALL, VLAL…SSMW, AAFV…LSIF, LAVV…DLGI, GLGL…GGVL, FLLA…AALI, FWDV…GLEI, WGLA…AVYI, and DILV…GLTI.

The protein belongs to the monovalent cation:proton antiporter 1 (CPA1) transporter (TC 2.A.36) family.

The protein resides in the cell membrane. Functionally, na(+)/H(+) antiporter that extrudes sodium in exchange for external protons. Can also transport lithium. The protein is Na(+)/H(+) antiporter NhaG (nhaG) of Bacillus atrophaeus.